Reading from the N-terminus, the 327-residue chain is Neurogenic differentiation factor 6-A (327 aa).

A disordered region spans residues glycine 17 to arginine 85. Residues cysteine 24–methionine 46 are compositionally biased toward basic and acidic residues. A compositionally biased stretch (acidic residues) spans aspartate 47 to aspartate 63. A compositionally biased stretch (basic residues) spans proline 68–lysine 80. A Nuclear localization signal motif is present at residues arginine 74 to lysine 80. A bHLH domain is found at valine 88–leucine 140.

In terms of assembly, efficient DNA binding requires dimerization with another bHLH protein. Embryonic olfactory bulbs. In adult, expressed in brain, eye, intestine, muscle, ovary and skin.

The protein resides in the nucleus. In terms of biological role, differentiation factor required for neurogenesis. Acts as an upstream activator of isl1. The chain is Neurogenic differentiation factor 6-A from Danio rerio (Zebrafish).